A 395-amino-acid polypeptide reads, in one-letter code: RNA ligase 1 (395 aa).

Residues Y48, R65, and K83 each coordinate ATP. K113 (N6-AMP-lysine intermediate) is an active-site residue. 3 residues coordinate ATP: E173, K255, and K257. Residue D285 participates in Mg(2+) binding.

Mg(2+) is required as a cofactor. The cofactor is Mn(2+).

It carries out the reaction ATP + (ribonucleotide)n-3'-hydroxyl + 5'-phospho-(ribonucleotide)m = (ribonucleotide)n+m + AMP + diphosphate.. Functionally, RNA ligase that ligates single-stranded nucleic acids in an ATP-dependent manner. Catalyzes both inter- and intra-molecular single-stranded DNA (ssDNA) ligation to &gt;50% completion in a matter of hours at an elevated temperature, although favoring intra-molecular ligation on RNA and single-stranded DNA substrates. Is able to catalyze the adenylation reaction of ssDNA 3'-terminal phosphate (ssDNA 3'p) to 3'-adenylated DNA (ssDNA 3'pp5'A). Does not have significant 3'-adenylation activity with a 3'-phosphorylated nicked dsDNA substrate. The protein is RNA ligase 1 of Thermus scotoductus.